The following is a 194-amino-acid chain: Adenylate kinase (194 aa).

10–15 lines the ATP pocket; sequence GAGKGT. The segment at 30–59 is NMP; sequence STGDMLRAAVAAGTPVGLKAKAVMESGGLV. Residues Thr31, Arg36, 57–59, 85–88, and Gln92 each bind AMP; these read GLV and GFPR. Residues 126–142 are LID; sequence NRAAEAKAKGEPVRKDD. Arg127 is an ATP binding site. Positions 139 and 150 each coordinate AMP. Residue Ala178 participates in ATP binding.

The protein belongs to the adenylate kinase family. In terms of assembly, monomer.

The protein resides in the cytoplasm. The enzyme catalyses AMP + ATP = 2 ADP. It participates in purine metabolism; AMP biosynthesis via salvage pathway; AMP from ADP: step 1/1. Catalyzes the reversible transfer of the terminal phosphate group between ATP and AMP. Plays an important role in cellular energy homeostasis and in adenine nucleotide metabolism. This Azorhizobium caulinodans (strain ATCC 43989 / DSM 5975 / JCM 20966 / LMG 6465 / NBRC 14845 / NCIMB 13405 / ORS 571) protein is Adenylate kinase.